The primary structure comprises 586 residues: UvrABC system protein C (586 aa).

The GIY-YIG domain occupies 17–94; the sequence is HKPGCYLWKD…IKQYKPRFNL (78 aa). In terms of domain architecture, UVR spans 201 to 236; the sequence is EQVLNHLQQQEIKASEQQNFEAARHFLDLQKAVLEL.

This sequence belongs to the UvrC family. In terms of assembly, interacts with UvrB in an incision complex.

The protein localises to the cytoplasm. In terms of biological role, the UvrABC repair system catalyzes the recognition and processing of DNA lesions. UvrC both incises the 5' and 3' sides of the lesion. The N-terminal half is responsible for the 3' incision and the C-terminal half is responsible for the 5' incision. The sequence is that of UvrABC system protein C from Mycoplasma pneumoniae (strain ATCC 29342 / M129 / Subtype 1) (Mycoplasmoides pneumoniae).